Consider the following 374-residue polypeptide: Chaperone protein DnaJ (374 aa).

Residues 4-69 form the J domain; it reads SYYEILEITQ…EKRAIYDRYG (66 aa). The CR-type zinc finger occupies 136-213; it reads GCKKNIDFTY…CKGLGYNESK (78 aa). Residues Cys-149, Cys-152, Cys-165, Cys-168, Cys-187, Cys-190, Cys-201, and Cys-204 each contribute to the Zn(2+) site. CXXCXGXG motif repeat units follow at residues 149-156, 165-172, 187-194, and 201-208; these read CKTCNGTG, CPKCQGRG, CPDCQGSG, and CSDCKGLG.

It belongs to the DnaJ family. As to quaternary structure, homodimer. It depends on Zn(2+) as a cofactor.

The protein localises to the cytoplasm. Participates actively in the response to hyperosmotic and heat shock by preventing the aggregation of stress-denatured proteins and by disaggregating proteins, also in an autonomous, DnaK-independent fashion. Unfolded proteins bind initially to DnaJ; upon interaction with the DnaJ-bound protein, DnaK hydrolyzes its bound ATP, resulting in the formation of a stable complex. GrpE releases ADP from DnaK; ATP binding to DnaK triggers the release of the substrate protein, thus completing the reaction cycle. Several rounds of ATP-dependent interactions between DnaJ, DnaK and GrpE are required for fully efficient folding. Also involved, together with DnaK and GrpE, in the DNA replication of plasmids through activation of initiation proteins. The sequence is that of Chaperone protein DnaJ from Campylobacter jejuni subsp. jejuni serotype O:6 (strain 81116 / NCTC 11828).